The chain runs to 457 residues: Argininosuccinate lyase (457 aa).

Belongs to the lyase 1 family. Argininosuccinate lyase subfamily.

It is found in the cytoplasm. It carries out the reaction 2-(N(omega)-L-arginino)succinate = fumarate + L-arginine. It functions in the pathway amino-acid biosynthesis; L-arginine biosynthesis; L-arginine from L-ornithine and carbamoyl phosphate: step 3/3. In Haemophilus influenzae (strain PittEE), this protein is Argininosuccinate lyase.